A 270-amino-acid chain; its full sequence is Coiled-coil domain-containing protein 3 (270 aa).

An N-terminal signal peptide occupies residues 1-21 (MLRQLLLAALCLAGPPAPARA). N100 is a glycosylation site (N-linked (GlcNAc...) asparagine). Residues 188 to 251 (SVQKALFEEE…NQKLSEKLAA (64 aa)) adopt a coiled-coil conformation.

In terms of assembly, homodimer. Expressed in umbilical vein endothelial cells (HUVEC), and at lower levels in aortic smooth muscle cells (HASMC).

The protein resides in the secreted. Its function is as follows. Negatively regulates TNF-alpha-induced pro-inflammatory response in endothelial cells (ECs) via inhibition of TNF-alpha-induced NF-kappaB activation in ECs. Positively regulates lipid accumulation in adipose cells. This Homo sapiens (Human) protein is Coiled-coil domain-containing protein 3 (CCDC3).